We begin with the raw amino-acid sequence, 332 residues long: Fructose-1,6-bisphosphatase class 1 (332 aa).

Mg(2+) contacts are provided by E93, D113, L115, and D116. Residues 116-119 (DGSS), N209, Y235, and K272 each bind substrate. Residue E278 coordinates Mg(2+).

The protein belongs to the FBPase class 1 family. Homotetramer. Requires Mg(2+) as cofactor.

Its subcellular location is the cytoplasm. The catalysed reaction is beta-D-fructose 1,6-bisphosphate + H2O = beta-D-fructose 6-phosphate + phosphate. The protein operates within carbohydrate biosynthesis; gluconeogenesis. In Syntrophus aciditrophicus (strain SB), this protein is Fructose-1,6-bisphosphatase class 1.